Here is a 568-residue protein sequence, read N- to C-terminus: Oxygen-dependent choline dehydrogenase (568 aa).

8 to 37 (DYIIIGAGSAGNTLAARLTEDAGVTVLLLE) provides a ligand contact to FAD. The Proton acceptor role is filled by His-477.

The protein belongs to the GMC oxidoreductase family. Requires FAD as cofactor.

It catalyses the reaction choline + A = betaine aldehyde + AH2. The enzyme catalyses betaine aldehyde + NAD(+) + H2O = glycine betaine + NADH + 2 H(+). Its pathway is amine and polyamine biosynthesis; betaine biosynthesis via choline pathway; betaine aldehyde from choline (cytochrome c reductase route): step 1/1. Involved in the biosynthesis of the osmoprotectant glycine betaine. Catalyzes the oxidation of choline to betaine aldehyde and betaine aldehyde to glycine betaine at the same rate. The chain is Oxygen-dependent choline dehydrogenase from Pseudomonas syringae pv. tomato (strain ATCC BAA-871 / DC3000).